The sequence spans 447 residues: Dirigent protein 10 (447 aa).

The first 21 residues, 1–21 (MAGQKILSLLVIALVVTFAAA), serve as a signal peptide directing secretion. Residues 74 to 85 (SGSTGSGLGAGT) show a composition bias toward gly residues. The segment at 74-123 (SGSTGSGLGAGTGSIPSSGSGPGLLPTASSVPGSLAGGGSGSLPTTGSAT) is disordered. Over residues 86-107 (GSIPSSGSGPGLLPTASSVPGS) the composition is skewed to low complexity.

This sequence belongs to the plant dirigent protein family. Homodimer. As to expression, in roots, mostly detected in root endodermis and quiescent center, and, to a lower extent, in root stele and cortex. Expressed in root vascular cylinder, flowers, siliques, cotyledon and leaf veins, and leaf margins. Present in the basal region of rosette leaf trichomes and in developing xylem.

The protein resides in the secreted. It is found in the extracellular space. The protein localises to the apoplast. Dirigent proteins impart stereoselectivity on the phenoxy radical-coupling reaction, yielding optically active lignans from two molecules of coniferyl alcohol in the biosynthesis of lignans, flavonolignans, and alkaloids and thus plays a central role in plant secondary metabolism. Regulates suberin accumulation in roots. The polypeptide is Dirigent protein 10 (DIR10) (Arabidopsis thaliana (Mouse-ear cress)).